Reading from the N-terminus, the 145-residue chain is UPF0179 protein MmarC6_0993 (145 aa).

The protein belongs to the UPF0179 family.

This is UPF0179 protein MmarC6_0993 from Methanococcus maripaludis (strain C6 / ATCC BAA-1332).